Reading from the N-terminus, the 205-residue chain is ITG-like peptide (205 aa).

Residues 1–15 form the signal peptide; that stretch reads MRVYAAITLVLVANT. Propeptides lie at residues 16–188 and 202–205; these read AYIG…TSGE and MPFA.

Expressed throughout the nervous system (at protein level).

The protein resides in the secreted. In Camponotus floridanus (Florida carpenter ant), this protein is ITG-like peptide.